The chain runs to 268 residues: Tryptophan synthase alpha chain (268 aa).

Active-site proton acceptor residues include Glu-49 and Asp-60.

It belongs to the TrpA family. In terms of assembly, tetramer of two alpha and two beta chains.

The enzyme catalyses (1S,2R)-1-C-(indol-3-yl)glycerol 3-phosphate + L-serine = D-glyceraldehyde 3-phosphate + L-tryptophan + H2O. The protein operates within amino-acid biosynthesis; L-tryptophan biosynthesis; L-tryptophan from chorismate: step 5/5. In terms of biological role, the alpha subunit is responsible for the aldol cleavage of indoleglycerol phosphate to indole and glyceraldehyde 3-phosphate. This chain is Tryptophan synthase alpha chain, found in Vibrio metschnikovii.